The primary structure comprises 225 residues: Ribosome maturation factor RimM (225 aa).

The PRC barrel domain maps to 144–225; that stretch reads ADEFYWVDLI…RIVVDWEADY (82 aa).

It belongs to the RimM family. Binds ribosomal protein uS19.

Its subcellular location is the cytoplasm. An accessory protein needed during the final step in the assembly of 30S ribosomal subunit, possibly for assembly of the head region. Essential for efficient processing of 16S rRNA. May be needed both before and after RbfA during the maturation of 16S rRNA. It has affinity for free ribosomal 30S subunits but not for 70S ribosomes. This is Ribosome maturation factor RimM from Burkholderia ambifaria (strain MC40-6).